We begin with the raw amino-acid sequence, 56 residues long: GSICLEPKVVGPCTAYLRRFYFDSETGKCTPFIYGGCEGNGNNFETLRACRAICRA.

In terms of domain architecture, BPTI/Kunitz inhibitor spans 4-54 (CLEPKVVGPCTAYLRRFYFDSETGKCTPFIYGGCEGNGNNFETLRACRAIC). Cystine bridges form between C4–C54, C13–C37, and C29–C50.

It belongs to the venom Kunitz-type family. Sea anemone type 2 potassium channel toxin subfamily.

Its subcellular location is the secreted. It localises to the nematocyst. In terms of biological role, this recombinant serine protease inhibitor inhibits trypsin (Ki=210 nM). In contrast to other sea anemone serine protease inhibitors, it does not significantly blocks histamine influence on intracellular calcium concentration in murine bone marrow-derived macrophages (tested at 1 and 10 uM). In vitro, it shows cytoprotective activity in the oxidative stress agent 6-hydroxydopamine (6-OHDA)-induced neurotoxicity model. In this model, it decreases reactive oxygen species (ROS) levels, and increases cell viability in a correlated manner. It is possible that the observed effect is due to the ability of this peptides to act as free-radical scavenger. In vivo, it shows analgesic activity, since it increases hot plate and tail flick withdrawal latencies, when using a mice thermal pain stimulation model. In Radianthus crispa (Leathery sea anemone), this protein is PI-stichotoxin-Hcr2m.